The following is an 841-amino-acid chain: Alpha-glucuronidase A (841 aa).

The N-terminal stretch at 1–20 (MRGSNLFQLTLALLLSLVAA) is a signal peptide. Asn51, Asn76, Asn149, Asn222, Asn279, Asn310, Asn343, Asn450, Asn465, Asn527, Asn576, Asn682, Asn723, and Asn732 each carry an N-linked (GlcNAc...) asparagine glycan.

The protein belongs to the glycosyl hydrolase 67 family.

It localises to the secreted. The catalysed reaction is an alpha-D-glucuronoside + H2O = D-glucuronate + an alcohol. Alpha-glucuronidase involved in the hydrolysis of xylan, a major structural heterogeneous polysaccharide found in plant biomass representing the second most abundant polysaccharide in the biosphere, after cellulose. Releases 4-O-methylglucuronic acid from xylan. This chain is Alpha-glucuronidase A (aguA), found in Aspergillus tubingensis.